The primary structure comprises 215 residues: Pyrrolidone-carboxylate peptidase (215 aa).

Active-site residues include glutamate 81, cysteine 144, and histidine 168.

This sequence belongs to the peptidase C15 family. Homotetramer.

The protein resides in the cytoplasm. It carries out the reaction Release of an N-terminal pyroglutamyl group from a polypeptide, the second amino acid generally not being Pro.. In terms of biological role, removes 5-oxoproline from various penultimate amino acid residues except L-proline. The sequence is that of Pyrrolidone-carboxylate peptidase from Bacillus velezensis (strain DSM 23117 / BGSC 10A6 / LMG 26770 / FZB42) (Bacillus amyloliquefaciens subsp. plantarum).